The primary structure comprises 335 residues: Mesoderm-specific transcript homolog protein (335 aa).

The next 2 helical transmembrane spans lie at W13–P33 and V63–Y83. The AB hydrolase-1 domain maps to I71–D310. The short motif at R98 to D103 is the RVIALD element. The N-linked (GlcNAc...) asparagine glycan is linked to N163. A helical membrane pass occupies residues V266–V286.

This sequence belongs to the AB hydrolase superfamily. Highly expressed in hydatidiform moles, but barely expressed in dermoid cysts. Biallelic expression is detected in blood lymphocytes. Seems to imprinted in an isoform-specific manner rather than in a tissue-specific manner in lymphocytes. Isoform 1 is expressed only from the paternal allele. Isoform 2 is expressed from both the paternal allele and the maternal allele.

It localises to the endoplasmic reticulum membrane. The polypeptide is Mesoderm-specific transcript homolog protein (MEST) (Homo sapiens (Human)).